A 385-amino-acid chain; its full sequence is Protein-glutamate methylesterase/protein-glutamine glutaminase (385 aa).

Aspartate 53 carries the post-translational modification 4-aspartylphosphate. The CheB-type methylesterase domain occupies lysine 196–serine 385. Residues serine 208, histidine 234, and aspartate 330 contribute to the active site.

It belongs to the CheB family. Phosphorylated by CheA. Phosphorylation of the N-terminal regulatory domain activates the methylesterase activity.

The protein localises to the cytoplasm. It carries out the reaction [protein]-L-glutamate 5-O-methyl ester + H2O = L-glutamyl-[protein] + methanol + H(+). It catalyses the reaction L-glutaminyl-[protein] + H2O = L-glutamyl-[protein] + NH4(+). Functionally, involved in chemotaxis. Part of a chemotaxis signal transduction system that modulates chemotaxis in response to various stimuli. Catalyzes the demethylation of specific methylglutamate residues introduced into the chemoreceptors (methyl-accepting chemotaxis proteins or MCP) by CheR. Also mediates the irreversible deamidation of specific glutamine residues to glutamic acid. The polypeptide is Protein-glutamate methylesterase/protein-glutamine glutaminase (Borreliella burgdorferi (strain ATCC 35210 / DSM 4680 / CIP 102532 / B31) (Borrelia burgdorferi)).